The chain runs to 199 residues: Small ribosomal subunit protein uS14m (199 aa).

Positions leucine 28–glutamine 67 are disordered.

This sequence belongs to the universal ribosomal protein uS14 family. As to quaternary structure, component of the mitochondrial ribosome small subunit (28S) which comprises a 12S rRNA and about 30 distinct proteins. Interacts with LIAT1.

The protein resides in the mitochondrion. This chain is Small ribosomal subunit protein uS14m (mrps-14), found in Caenorhabditis elegans.